The following is a 310-amino-acid chain: Ribosomal RNA small subunit methyltransferase H (310 aa).

S-adenosyl-L-methionine-binding positions include 32-34 (GGH), D52, F79, D100, and Q107.

This sequence belongs to the methyltransferase superfamily. RsmH family.

The protein localises to the cytoplasm. The catalysed reaction is cytidine(1402) in 16S rRNA + S-adenosyl-L-methionine = N(4)-methylcytidine(1402) in 16S rRNA + S-adenosyl-L-homocysteine + H(+). Its function is as follows. Specifically methylates the N4 position of cytidine in position 1402 (C1402) of 16S rRNA. The protein is Ribosomal RNA small subunit methyltransferase H of Bacillus cytotoxicus (strain DSM 22905 / CIP 110041 / 391-98 / NVH 391-98).